We begin with the raw amino-acid sequence, 356 residues long: Glycerol-3-phosphate dehydrogenase [NAD(P)+] (356 aa).

Positions 12, 32, 33, and 117 each coordinate NADPH. Residues lysine 117, glycine 151, and serine 153 each contribute to the sn-glycerol 3-phosphate site. Alanine 155 serves as a coordination point for NADPH. Residues lysine 206, aspartate 265, arginine 276, and asparagine 277 each coordinate sn-glycerol 3-phosphate. Lysine 206 serves as the catalytic Proton acceptor. An NADPH-binding site is contributed by arginine 276. NADPH-binding residues include leucine 309 and glutamate 311.

The protein belongs to the NAD-dependent glycerol-3-phosphate dehydrogenase family.

The protein localises to the cytoplasm. The catalysed reaction is sn-glycerol 3-phosphate + NAD(+) = dihydroxyacetone phosphate + NADH + H(+). It carries out the reaction sn-glycerol 3-phosphate + NADP(+) = dihydroxyacetone phosphate + NADPH + H(+). It functions in the pathway membrane lipid metabolism; glycerophospholipid metabolism. Functionally, catalyzes the reduction of the glycolytic intermediate dihydroxyacetone phosphate (DHAP) to sn-glycerol 3-phosphate (G3P), the key precursor for phospholipid synthesis. In Treponema pallidum (strain Nichols), this protein is Glycerol-3-phosphate dehydrogenase [NAD(P)+].